A 310-amino-acid chain; its full sequence is 4-diphosphocytidyl-2-C-methyl-D-erythritol kinase (310 aa).

Residue lysine 12 is part of the active site. Residue 97-107 (PIGAGLAGGSS) participates in ATP binding. The active site involves aspartate 139.

Belongs to the GHMP kinase family. IspE subfamily.

The enzyme catalyses 4-CDP-2-C-methyl-D-erythritol + ATP = 4-CDP-2-C-methyl-D-erythritol 2-phosphate + ADP + H(+). It participates in isoprenoid biosynthesis; isopentenyl diphosphate biosynthesis via DXP pathway; isopentenyl diphosphate from 1-deoxy-D-xylulose 5-phosphate: step 3/6. Its function is as follows. Catalyzes the phosphorylation of the position 2 hydroxy group of 4-diphosphocytidyl-2C-methyl-D-erythritol. The sequence is that of 4-diphosphocytidyl-2-C-methyl-D-erythritol kinase from Synechococcus sp. (strain CC9311).